The following is a 409-amino-acid chain: MEALQRQQAARLAQGVGPLAPPRLPLPQPPLLGARTLQAPEGAIGVVGAEEEEGAEDEEGETPLAEEETAEQSHPGARCPNSPSSQSPGIQPHEWTYEEQFKQLYELDADPKRKEFLDDLFSFMQKRGTPVNRVPIMAKQVLDLYALFRLVTAKGGLVEVINRKVWREVTRGLSLPTTITSAAFTLRTQYMKYLYPYECETRALSSPGELQAAIDSNRREGRRQAYTAVPLFNLAGPTPRGAPGPASSHGPAPTATPNCPGPTQGSASGLPAHACAQLSPSPVKKEESGIPPPRLALPMGLASEATREKLAPEEPPEKRAVLMGPVDSPRLGAPPSFLPRGKAPLREERLDGPLNLAGSGISSINVALEINGVVYTGILFARRQPVPASLGPTNPPPLPSTGPPSSTLP.

The segment covering 1–14 (MEALQRQQAARLAQ) has biased composition (low complexity). The disordered stretch occupies residues 1 to 91 (MEALQRQQAA…SPSSQSPGIQ (91 aa)). The span at 19 to 30 (LAPPRLPLPQPP) shows a compositional bias: pro residues. Over residues 49–70 (AEEEEGAEDEEGETPLAEEETA) the composition is skewed to acidic residues. An ARID domain is found at 110–202 (DPKRKEFLDD…YLYPYECETR (93 aa)). Disordered stretches follow at residues 233 to 274 (NLAG…PAHA), 306 to 333 (TREKLAPEEPPEKRAVLMGPVDSPRLGA), and 385 to 409 (PVPASLGPTNPPPLPSTGPPSSTLP). Positions 235-257 (AGPTPRGAPGPASSHGPAPTATP) are enriched in low complexity. Residues 301-386 (LASEATREKL…GILFARRQPV (86 aa)) enclose the REKLES domain. Over residues 306-320 (TREKLAPEEPPEKRA) the composition is skewed to basic and acidic residues. Positions 393–402 (TNPPPLPSTG) are enriched in pro residues.

As to quaternary structure, interacts (via REKLES DOMAIN) with NPM1; the interaction mediates ARID3C nuclear shuttling.

Its subcellular location is the nucleus. Transcription factor involved in monocyte-to-macrophage differentiation. Forms a complex with NPM1 to translocate to the nucleus, acting as a transcription factor that promotes the expression of the genes involved in macrophage differentiation, such as STAT3, STAT1 and JUNB. The sequence is that of AT-rich interactive domain-containing protein 3C (Arid3c) from Mus musculus (Mouse).